The chain runs to 238 residues: Heme oxygenase 1 (238 aa).

The protein belongs to the heme oxygenase family.

The enzyme catalyses heme b + 3 reduced [NADPH--hemoprotein reductase] + 3 O2 = biliverdin IXalpha + CO + Fe(2+) + 3 oxidized [NADPH--hemoprotein reductase] + 3 H2O + H(+). Its function is as follows. Catalyzes the opening of the heme ring with the release of iron. Key enzyme in the synthesis of the chromophoric part of the photosynthetic antennae. Upon overexpression in E.coli with PCB:ferredoxin oxidoreductase, CpeS and either CpcB or PecB permits synthesis of phycocyanin-coupled CpcB or PecB. The sequence is that of Heme oxygenase 1 (pbsA1) from Nostoc sp. (strain PCC 7120 / SAG 25.82 / UTEX 2576).